The following is a 710-amino-acid chain: E3 ubiquitin-protein ligase TRIM9 (710 aa).

The segment at 10-50 (CPVCGSFYREPIILPCSHNLCQACARNILVQTPESESPQSR) adopts an RING-type zinc-finger fold. Phosphothreonine is present on Thr41. 4 positions are modified to phosphoserine: Ser44, Ser46, Ser49, and Ser53. 2 consecutive B box-type zinc fingers follow at residues 163–212 (AAAL…LVPP) and 224–266 (RKVS…VKAL). Residues Cys168, Cys171, Cys193, His198, Cys229, His232, Cys252, and His258 each contribute to the Zn(2+) site. Positions 273–340 (HKSQLSQALN…KAQLLARVNK (68 aa)) form a coiled coil. The 59-residue stretch at 374–432 (IKENDPSGFLQISDALIRRVHLTEDQWGKGTLTPRMTTDFDLSLDNSPLLQSIHQLDFV) folds into the COS domain. Residues 440 to 535 (VPATPILQLE…KTLVLQTSEV (96 aa)) enclose the Fibronectin type-III domain. In terms of domain architecture, B30.2/SPRY spans 533-702 (SEVAWFAFDP…LHTGLPVPDF (170 aa)).

Interacts with SNAP25. Auto-ubiquitinated. In terms of tissue distribution, brain (at protein level). Expressed in fetal and adult brain.

The protein resides in the cytoplasmic vesicle. It is found in the secretory vesicle. Its subcellular location is the synaptic vesicle. It localises to the synapse. The protein localises to the cytoplasm. The protein resides in the cytoskeleton. It is found in the cell projection. Its subcellular location is the dendrite. The catalysed reaction is S-ubiquitinyl-[E2 ubiquitin-conjugating enzyme]-L-cysteine + [acceptor protein]-L-lysine = [E2 ubiquitin-conjugating enzyme]-L-cysteine + N(6)-ubiquitinyl-[acceptor protein]-L-lysine.. The protein operates within protein modification; protein ubiquitination. Functionally, E3 ubiquitin-protein ligase which ubiquitinates itself in cooperation with an E2 enzyme UBE2D2/UBC4 and serves as a targeting signal for proteasomal degradation. May play a role in regulation of neuronal functions. May act as a regulator of synaptic vesicle exocytosis by controlling the availability of SNAP25 for the SNARE complex formation. This Rattus norvegicus (Rat) protein is E3 ubiquitin-protein ligase TRIM9 (Trim9).